Here is a 1664-residue protein sequence, read N- to C-terminus: DNA-directed RNA polymerase I subunit RPA190 (1664 aa).

The Zn(2+) site is built by C62, C65, C72, H75, C102, C105, C233, and C236. The disordered stretch occupies residues 280–310 (QAKKLDGSNEASANDEESFDVGRNPTTRPKT). Mg(2+) is bound by residues D627, D629, and D631. S889 carries the phosphoserine modification. The segment at 992 to 1004 (PQEYYFHCMAGRE) is bridging helix. The disordered stretch occupies residues 1343–1423 (DIGVAVPRLQ…DSDSEDEDVD (81 aa)). The span at 1393 to 1414 (ETMREAEKSSDEEGIDSDKESD) shows a compositional bias: basic and acidic residues. A Phosphoserine modification is found at S1636.

It belongs to the RNA polymerase beta' chain family. Component of the RNA polymerase I (Pol I) complex consisting of 14 subunits: RPA135, RPA190, RPC40, RPA14, RPB5, RPO26, RPA43, RPB8, RPA12, RPB10, RPC19, RPC10, RPA49 and RPA34. The complex is composed of a horseshoe-shaped core containing ten subunits (RPA135, RPA190, RPB5, RPO26, RPB8, RPB10, RPC10, RPA12, RPC19 and RPC40) where RPA135 and RPA190 form the DNA-binding cleft. Outside of the core, RPA14 and RPA43 form the stalk that mediates interactions with transcription initiation factors and newly synthesized RNA.

It localises to the nucleus. It is found in the nucleolus. It carries out the reaction RNA(n) + a ribonucleoside 5'-triphosphate = RNA(n+1) + diphosphate. Functionally, DNA-dependent RNA polymerases catalyze the transcription of DNA into RNA using the four ribonucleoside triphosphates as substrates. Component of RNA polymerase I (Pol I) which synthesizes ribosomal RNA precursors. Besides, RNA polymerase I has intrinsic RNA cleavage activity. RPA190 and RPA135 both contribute to the polymerase catalytic activity and together form the Pol I active center. In addition, subunit RPA12 contributes a catalytic zinc ribbon that is required for RNA cleavage by Pol I. A single stranded DNA template strand of the promoter is positioned within the central active site cleft of Pol I. A bridging helix emanates from RPA190 and crosses the cleft near the catalytic site and is thought to promote translocation of Pol I by acting as a ratchet that moves the RNA-DNA hybrid through the active site by switching from straight to bent conformations at each step of nucleotide addition. The protein is DNA-directed RNA polymerase I subunit RPA190 (RPA190) of Saccharomyces cerevisiae (strain ATCC 204508 / S288c) (Baker's yeast).